The following is a 40-amino-acid chain: Photosystem II reaction center protein J (40 aa).

The chain crosses the membrane as a helical span at residues 8–28 (IPLWMIGTLAGILVISLIGIF).

Belongs to the PsbJ family. In terms of assembly, PSII is composed of 1 copy each of membrane proteins PsbA, PsbB, PsbC, PsbD, PsbE, PsbF, PsbH, PsbI, PsbJ, PsbK, PsbL, PsbM, PsbT, PsbX, PsbY, PsbZ, Psb30/Ycf12, at least 3 peripheral proteins of the oxygen-evolving complex and a large number of cofactors. It forms dimeric complexes.

The protein resides in the plastid membrane. In terms of biological role, one of the components of the core complex of photosystem II (PSII). PSII is a light-driven water:plastoquinone oxidoreductase that uses light energy to abstract electrons from H(2)O, generating O(2) and a proton gradient subsequently used for ATP formation. It consists of a core antenna complex that captures photons, and an electron transfer chain that converts photonic excitation into a charge separation. This is Photosystem II reaction center protein J from Cuscuta gronovii (Common dodder).